Reading from the N-terminus, the 374-residue chain is Alanine racemase (374 aa).

Lysine 35 acts as the Proton acceptor; specific for D-alanine in catalysis. Lysine 35 carries the post-translational modification N6-(pyridoxal phosphate)lysine. Arginine 133 contacts substrate. The active-site Proton acceptor; specific for L-alanine is the tyrosine 264. Residue methionine 312 participates in substrate binding.

This sequence belongs to the alanine racemase family. The cofactor is pyridoxal 5'-phosphate.

The enzyme catalyses L-alanine = D-alanine. Its pathway is amino-acid biosynthesis; D-alanine biosynthesis; D-alanine from L-alanine: step 1/1. Its function is as follows. Catalyzes the interconversion of L-alanine and D-alanine. May also act on other amino acids. The polypeptide is Alanine racemase (alr) (Thermobifida fusca (strain YX)).